A 71-amino-acid chain; its full sequence is DNA-directed RNA polymerase subunit 10-like protein (71 aa).

Residues Cys-7, Cys-10, Cys-44, and Cys-45 each coordinate Zn(2+).

The protein belongs to the archaeal Rpo10/eukaryotic RPB10 RNA polymerase subunit family. In terms of assembly, interacts with IYO.

Its subcellular location is the nucleus. This is DNA-directed RNA polymerase subunit 10-like protein from Arabidopsis thaliana (Mouse-ear cress).